The following is a 128-amino-acid chain: Translation initiation factor 5A (128 aa).

Lysine 35 bears the Hypusine mark.

It belongs to the eIF-5A family.

The protein localises to the cytoplasm. In terms of biological role, functions by promoting the formation of the first peptide bond. The sequence is that of Translation initiation factor 5A (eIF5A) from Methanocella arvoryzae (strain DSM 22066 / NBRC 105507 / MRE50).